Reading from the N-terminus, the 230-residue chain is Tol-Pal system protein TolQ (230 aa).

3 consecutive transmembrane segments (helical) span residues 16–36 (LVKL…AIII), 139–159 (YIGL…LGAV), and 171–191 (IAEA…AVMA).

Belongs to the ExbB/TolQ family. As to quaternary structure, the Tol-Pal system is composed of five core proteins: the inner membrane proteins TolA, TolQ and TolR, the periplasmic protein TolB and the outer membrane protein Pal. They form a network linking the inner and outer membranes and the peptidoglycan layer.

It localises to the cell inner membrane. In terms of biological role, part of the Tol-Pal system, which plays a role in outer membrane invagination during cell division and is important for maintaining outer membrane integrity. Required, with TolR, for the proton motive force-dependent activation of TolA and for TolA-Pal interaction. This chain is Tol-Pal system protein TolQ, found in Escherichia coli O157:H7.